The following is a 186-amino-acid chain: Elongation factor P (186 aa).

This sequence belongs to the elongation factor P family.

Its subcellular location is the cytoplasm. The protein operates within protein biosynthesis; polypeptide chain elongation. Involved in peptide bond synthesis. Stimulates efficient translation and peptide-bond synthesis on native or reconstituted 70S ribosomes in vitro. Probably functions indirectly by altering the affinity of the ribosome for aminoacyl-tRNA, thus increasing their reactivity as acceptors for peptidyl transferase. This chain is Elongation factor P, found in Prochlorococcus marinus (strain SARG / CCMP1375 / SS120).